Reading from the N-terminus, the 110-residue chain is Quaternary ammonium compound-resistance protein QacE (110 aa).

4 helical membrane passes run 1 to 21 (MKGW…TSAL), 30 to 50 (LAPS…LSLV), 58 to 78 (VAYA…AWLL), and 85 to 105 (AWGF…NLLS).

The protein belongs to the drug/metabolite transporter (DMT) superfamily. Small multidrug resistance (SMR) (TC 2.A.7.1) family.

The protein localises to the cell membrane. Functionally, multidrug exporter. Is implicated for the resistance to bacteriocidal quaternary ammonium compounds. The chain is Quaternary ammonium compound-resistance protein QacE (qacE) from Escherichia coli.